A 580-amino-acid chain; its full sequence is Putative multidrug export ATP-binding/permease protein YgaD (580 aa).

Topologically, residues 1-17 (MGVMKRYMQFVKPYKKQ) are cytoplasmic. A helical transmembrane segment spans residues 18-38 (IFVTVLIGIVKFSIPLALPLL). The 289-residue stretch at 19-307 (FVTVLIGIVK…LINSSTTLTQ (289 aa)) folds into the ABC transmembrane type-1 domain. Residues 39-57 (LKYVVDDIIQGGGTASDKT) lie on the Extracellular side of the membrane. Residues 58-78 (TSLFTIMAIMFALFLILRPPV) traverse the membrane as a helical segment. The Cytoplasmic portion of the chain corresponds to 79–135 (EYYRQYFAQWTASKVLYDIRAKLFDHIQKLSLRFYANTRTGEVISRVINDVEQTKDF). The chain crosses the membrane as a helical span at residues 136 to 156 (VITGLMNIWLDMLTILIVISI). Residues 157–163 (MLTLDVK) lie on the Extracellular side of the membrane. The chain crosses the membrane as a helical span at residues 164 to 184 (LTLISIVLFPLYGISVKYFYG). Residues 185 to 243 (RLRKLTRERSQALAQVQGHLHERIQGMPVIRSFAIEDHEQAQFNEKNGHFLDKAIRHTN) lie on the Cytoplasmic side of the membrane. Residues 244-263 (WNAKTFAVVNTITDLAPLIV) form a helical membrane-spanning segment. Residues 264–268 (IACAG) lie on the Extracellular side of the membrane. The helical transmembrane segment at 269–288 (YFVINGPLTVGTMVAFVGYI) threads the bilayer. The Cytoplasmic portion of the chain corresponds to 289 to 580 (DRMYNPVRRL…KHLFTIQNLN (292 aa)). The 236-residue stretch at 341-576 (VEFQNVSFQY…ESQYKHLFTI (236 aa)) folds into the ABC transporter domain. 375–382 (GMSGGGKS) is a binding site for ATP.

The protein belongs to the ABC transporter superfamily. As to quaternary structure, homodimer.

It is found in the cell membrane. Its function is as follows. May be involved in multidrug export. Transmembrane domains (TMD) form a pore in the cell membrane and the ATP-binding domain (NBD) is responsible for energy generation. This chain is Putative multidrug export ATP-binding/permease protein YgaD (ygaD), found in Bacillus subtilis (strain 168).